Here is a 541-residue protein sequence, read N- to C-terminus: Chaperonin GroEL (541 aa).

Residues 29–32 (TLGP), 86–90 (DGTTT), Gly413, 477–479 (DAL), and Asp493 contribute to the ATP site.

Belongs to the chaperonin (HSP60) family. Forms a cylinder of 14 subunits composed of two heptameric rings stacked back-to-back. Interacts with the co-chaperonin GroES.

Its subcellular location is the cytoplasm. The enzyme catalyses ATP + H2O + a folded polypeptide = ADP + phosphate + an unfolded polypeptide.. In terms of biological role, together with its co-chaperonin GroES, plays an essential role in assisting protein folding. The GroEL-GroES system forms a nano-cage that allows encapsulation of the non-native substrate proteins and provides a physical environment optimized to promote and accelerate protein folding. This Clostridium botulinum (strain ATCC 19397 / Type A) protein is Chaperonin GroEL.